Here is a 501-residue protein sequence, read N- to C-terminus: DEAD-box ATP-dependent RNA helicase 36 (501 aa).

The disordered stretch occupies residues 1-68 (MEVDGEARPF…AAAVTEHAGD (68 aa)). Residues 36-46 (EEPPNPSPSPA) show a composition bias toward pro residues. Positions 59–68 (AAAVTEHAGD) are enriched in low complexity. A Q motif motif is present at residues 77 to 105 (STFAELGLSQWLVDVCDSLGMRVPTAVQR). A Helicase ATP-binding domain is found at 108–281 (IPRALEGRDV…ELSGNNSYFF (174 aa)). Residue 121-128 (AETGSGKT) coordinates ATP. Residues 229-232 (DEAD) carry the DEAD box motif. Residues 292 to 456 (TLKQLYIHVP…AYDGEMRDVN (165 aa)) form the Helicase C-terminal domain. Over residues 473–486 (MADEGHEDKVQARK) the composition is skewed to basic and acidic residues. The tract at residues 473 to 501 (MADEGHEDKVQARKEQKKRAQERKRKHDE) is disordered. Residues 475-501 (DEGHEDKVQARKEQKKRAQERKRKHDE) are a coiled coil. The segment covering 487 to 501 (EQKKRAQERKRKHDE) has biased composition (basic residues).

Belongs to the DEAD box helicase family. DDX49/DBP8 subfamily.

It carries out the reaction ATP + H2O = ADP + phosphate + H(+). This is DEAD-box ATP-dependent RNA helicase 36 from Oryza sativa subsp. japonica (Rice).